The primary structure comprises 54 residues: Photosystem II reaction center protein K (54 aa).

A propeptide spanning residues 1 to 17 is cleaved from the precursor; the sequence is MSFENFAIITLKENVFA. Residues 33-53 form a helical membrane-spanning segment; it reads LPIIPVLFLLLAFVWQSAVKF.

Belongs to the PsbK family. In terms of assembly, PSII is composed of 1 copy each of membrane proteins PsbA, PsbB, PsbC, PsbD, PsbE, PsbF, PsbH, PsbI, PsbJ, PsbK, PsbL, PsbM, PsbT, PsbY, PsbZ, Psb30/Ycf12, at least 3 peripheral proteins of the oxygen-evolving complex and a large number of cofactors. It forms dimeric complexes.

It localises to the plastid. The protein resides in the chloroplast thylakoid membrane. In terms of biological role, one of the components of the core complex of photosystem II (PSII). PSII is a light-driven water:plastoquinone oxidoreductase that uses light energy to abstract electrons from H(2)O, generating O(2) and a proton gradient subsequently used for ATP formation. It consists of a core antenna complex that captures photons, and an electron transfer chain that converts photonic excitation into a charge separation. The polypeptide is Photosystem II reaction center protein K (Euglena deses).